Reading from the N-terminus, the 414-residue chain is MSHKIQGGSVVEMQGDEMTRIIWELIKEKLIFPYVDLDLHSYDLSIENRDATNDQVTKDAAEAIKKYNVGVKCATITPDEKRVEEFKLKQMWKSPNGTIRNILGGTVFREAIICKNIPRLVSGWVKPIIIGRHAYGDQYRATDFVVPGPGKVEICYTPSDGSPKTVYLVHNFTESGGVAMGMFNQDKSIEDFAHSSFQMALSKNWPLYLSTKNTILKKYDGRFKDIFQEIYDKQYKSQFEAQNIWYEHRLIDDMVAQAMKSEGGFIWACKNYDGDVQSDSVAQGYGSLGMMTSVLVCPDGKTVEAEAAHGTVTRHYRMYQKGQETSTNPIASIFAWTRGLAHRAKLDNNKELSFFAKALEEVCIETIEAGFMTKDLAACIKGLPNVQRSDYLNTFEFMDKLGENLQLKLAQAKL.

Residue S2 is modified to N-acetylserine. Residue Y42 is modified to Phosphotyrosine. 75-77 (TIT) is an NADP(+) binding site. T77 is a substrate binding site. K81 bears the N6-acetyllysine mark. R82 is a binding site for NADP(+). Substrate contacts are provided by residues 94-100 (SPNGTIR) and R109. K126 carries the post-translational modification N6-succinyllysine. Residues R132 and K212 each coordinate substrate. Residues K224 and K233 each carry the N6-acetyllysine modification. D252 serves as a coordination point for Mn(2+). K260 is an NADP(+) binding site. Residues D275 and D279 each contribute to the Mn(2+) site. Residue 310-315 (GTVTRH) coordinates NADP(+). An N6-acetyllysine modification is found at K321. N328 serves as a coordination point for NADP(+). Residue S389 is modified to Phosphoserine. Position 400 is an N6-succinyllysine (K400).

It belongs to the isocitrate and isopropylmalate dehydrogenases family. In terms of assembly, homodimer. It depends on Mg(2+) as a cofactor. Mn(2+) is required as a cofactor. Acetylation at Lys-374 dramatically reduces catalytic activity.

Its subcellular location is the cytoplasm. It localises to the cytosol. It carries out the reaction D-threo-isocitrate + NADP(+) = 2-oxoglutarate + CO2 + NADPH. Its function is as follows. Catalyzes the NADP(+)-dependent oxidative decarboxylation of isocitrate (D-threo-isocitrate) to 2-ketoglutarate (2-oxoglutarate), which is required by other enzymes such as the phytanoyl-CoA dioxygenase. Plays a critical role in the generation of NADPH, an important cofactor in many biosynthesis pathways. May act as a corneal epithelial crystallin and may be involved in maintaining corneal epithelial transparency. The sequence is that of Isocitrate dehydrogenase [NADP] cytoplasmic (IDH1) from Ovis aries (Sheep).